Here is a 602-residue protein sequence, read N- to C-terminus: UvrABC system protein C (602 aa).

The GIY-YIG domain maps to 19–97 (EEPGVYRMIG…IKSLAPRYNI (79 aa)). The UVR domain maps to 206–241 (SEVIDDLTARMHAAAERLAFEEAAACRDQVRVLQAV).

The protein belongs to the UvrC family. As to quaternary structure, interacts with UvrB in an incision complex.

It is found in the cytoplasm. In terms of biological role, the UvrABC repair system catalyzes the recognition and processing of DNA lesions. UvrC both incises the 5' and 3' sides of the lesion. The N-terminal half is responsible for the 3' incision and the C-terminal half is responsible for the 5' incision. The polypeptide is UvrABC system protein C (Aromatoleum aromaticum (strain DSM 19018 / LMG 30748 / EbN1) (Azoarcus sp. (strain EbN1))).